The primary structure comprises 87 residues: Toxin Cll5b (87 aa).

The first 19 residues, 1 to 19, serve as a signal peptide directing secretion; sequence MNSLLMITACLAEIGTVWA. Positions 20–85 constitute an LCN-type CS-alpha/beta domain; that stretch reads KEGYLVNKST…TYPLPNKSCS (66 aa). 4 disulfide bridges follow: Cys-31/Cys-84, Cys-35/Cys-60, Cys-44/Cys-65, and Cys-48/Cys-67. Positions 86–87 are cleaved as a propeptide — removed by a carboxypeptidase; the sequence is KK.

Belongs to the long (4 C-C) scorpion toxin superfamily. Sodium channel inhibitor family. Beta subfamily. In terms of tissue distribution, expressed by the venom gland.

It is found in the secreted. Functionally, beta toxins bind voltage-independently at site-4 of sodium channels (Nav) and shift the voltage of activation toward more negative potentials thereby affecting sodium channel activation and promoting spontaneous and repetitive firing. The protein is Toxin Cll5b of Centruroides limpidus (Mexican scorpion).